The chain runs to 635 residues: Threonine--tRNA ligase (635 aa).

The TGS domain occupies 1–58 (MIRVICDNETFELPTGSTAADFASKIKNSHYFAGVVINDQIKDLSTTLSEGDVLKFVT). A catalytic region spans residues 237–528 (DHRVLGTKLD…LIEHFKGRFP (292 aa)). Zn(2+)-binding residues include Cys-328, His-379, and His-505.

The protein belongs to the class-II aminoacyl-tRNA synthetase family. As to quaternary structure, homodimer. Requires Zn(2+) as cofactor.

The protein localises to the cytoplasm. The enzyme catalyses tRNA(Thr) + L-threonine + ATP = L-threonyl-tRNA(Thr) + AMP + diphosphate + H(+). In terms of biological role, catalyzes the attachment of threonine to tRNA(Thr) in a two-step reaction: L-threonine is first activated by ATP to form Thr-AMP and then transferred to the acceptor end of tRNA(Thr). Also edits incorrectly charged L-seryl-tRNA(Thr). This Chlamydia felis (strain Fe/C-56) (Chlamydophila felis) protein is Threonine--tRNA ligase.